The sequence spans 123 residues: Large ribosomal subunit protein bL12 (123 aa).

The protein belongs to the bacterial ribosomal protein bL12 family. As to quaternary structure, homodimer. Part of the ribosomal stalk of the 50S ribosomal subunit. Forms a multimeric L10(L12)X complex, where L10 forms an elongated spine to which 2 to 4 L12 dimers bind in a sequential fashion. Binds GTP-bound translation factors.

In terms of biological role, forms part of the ribosomal stalk which helps the ribosome interact with GTP-bound translation factors. Is thus essential for accurate translation. This Marinomonas sp. (strain MWYL1) protein is Large ribosomal subunit protein bL12.